We begin with the raw amino-acid sequence, 383 residues long: 8-amino-7-oxononanoate synthase (383 aa).

Arg21 contacts substrate. Gly108–Tyr109 contributes to the pyridoxal 5'-phosphate binding site. His133 contributes to the substrate binding site. Pyridoxal 5'-phosphate is bound by residues Ser179, His207, and Thr233. Lys236 is subject to N6-(pyridoxal phosphate)lysine. Residue Thr350 coordinates substrate.

Belongs to the class-II pyridoxal-phosphate-dependent aminotransferase family. BioF subfamily. As to quaternary structure, homodimer. Pyridoxal 5'-phosphate serves as cofactor.

It carries out the reaction 6-carboxyhexanoyl-[ACP] + L-alanine + H(+) = (8S)-8-amino-7-oxononanoate + holo-[ACP] + CO2. Its pathway is cofactor biosynthesis; biotin biosynthesis. Functionally, catalyzes the decarboxylative condensation of pimeloyl-[acyl-carrier protein] and L-alanine to produce 8-amino-7-oxononanoate (AON), [acyl-carrier protein], and carbon dioxide. The sequence is that of 8-amino-7-oxononanoate synthase from Yersinia pestis bv. Antiqua (strain Angola).